An 85-amino-acid chain; its full sequence is Elongation factor 1-beta (85 aa).

The protein belongs to the EF-1-beta/EF-1-delta family.

Promotes the exchange of GDP for GTP in EF-1-alpha/GDP, thus allowing the regeneration of EF-1-alpha/GTP that could then be used to form the ternary complex EF-1-alpha/GTP/AAtRNA. The polypeptide is Elongation factor 1-beta (Methanospirillum hungatei JF-1 (strain ATCC 27890 / DSM 864 / NBRC 100397 / JF-1)).